Consider the following 271-residue polypeptide: 60 kDa heat shock protein, mitochondrial (271 aa).

Serine 30 and serine 33 each carry phosphoserine. Residue 50–54 (DGTTT) participates in ATP binding. The residue at position 83 (lysine 83) is an N6-acetyllysine. 3 positions are modified to N6-acetyllysine; alternate: lysine 84, lysine 97, and lysine 112. N6-succinyllysine; alternate is present on residues lysine 84, lysine 97, and lysine 112. At lysine 125 the chain carries N6-acetyllysine. Position 126 is an N6-acetyllysine; alternate (lysine 126). Lysine 126 bears the N6-succinyllysine; alternate mark. Lysine 145 bears the N6-acetyllysine mark. Lysine 175 bears the N6-succinyllysine mark. An N6-acetyllysine mark is found at lysine 188 and lysine 237. Glycine 257 provides a ligand contact to ATP. Residue lysine 270 is modified to N6-acetyllysine.

Belongs to the chaperonin (HSP60) family. As to quaternary structure, homoheptamer arranged in a ring structure. The functional units of these chaperonins consist of heptameric rings of the large subunit Hsp60, which function as a back-to-back double ring. Interacts with 2 heptameric Hsp10 rings to form the symmetrical football complex. Interacts with HRAS. Interacts with ATAD3A. Interacts with ETFBKMT and EEF1AKMT3. Interacts with MFHAS1. As to expression, detected at higher levels in caput epididymal spermatazoa than in cauda epididymal spermatazoa (at protein level).

It localises to the mitochondrion matrix. The enzyme catalyses ATP + H2O + a folded polypeptide = ADP + phosphate + an unfolded polypeptide.. Chaperonin implicated in mitochondrial protein import and macromolecular assembly. Together with Hsp10, facilitates the correct folding of imported proteins. May also prevent misfolding and promote the refolding and proper assembly of unfolded polypeptides generated under stress conditions in the mitochondrial matrix. The functional units of these chaperonins consist of heptameric rings of the large subunit Hsp60, which function as a back-to-back double ring. In a cyclic reaction, Hsp60 ring complexes bind one unfolded substrate protein per ring, followed by the binding of ATP and association with 2 heptameric rings of the co-chaperonin Hsp10. This leads to sequestration of the substrate protein in the inner cavity of Hsp60 where, for a certain period of time, it can fold undisturbed by other cell components. Synchronous hydrolysis of ATP in all Hsp60 subunits results in the dissociation of the chaperonin rings and the release of ADP and the folded substrate protein. In Mesocricetus auratus (Golden hamster), this protein is 60 kDa heat shock protein, mitochondrial.